The primary structure comprises 159 residues: Phosphopantetheine adenylyltransferase (159 aa).

Thr-9 lines the substrate pocket. ATP contacts are provided by residues 9–10 and His-17; that span reads TF. Positions 41, 73, and 87 each coordinate substrate. ATP contacts are provided by residues 88 to 90, Glu-98, and 123 to 129; these read GLR and YSFISST.

The protein belongs to the bacterial CoaD family. As to quaternary structure, homohexamer. Mg(2+) is required as a cofactor.

The protein localises to the cytoplasm. The catalysed reaction is (R)-4'-phosphopantetheine + ATP + H(+) = 3'-dephospho-CoA + diphosphate. The protein operates within cofactor biosynthesis; coenzyme A biosynthesis; CoA from (R)-pantothenate: step 4/5. Functionally, reversibly transfers an adenylyl group from ATP to 4'-phosphopantetheine, yielding dephospho-CoA (dPCoA) and pyrophosphate. This Pseudomonas putida (strain ATCC 700007 / DSM 6899 / JCM 31910 / BCRC 17059 / LMG 24140 / F1) protein is Phosphopantetheine adenylyltransferase.